A 226-amino-acid chain; its full sequence is Cytidylate kinase (226 aa).

14–22 (GPAGAGKST) serves as a coordination point for ATP.

Belongs to the cytidylate kinase family. Type 1 subfamily.

It is found in the cytoplasm. It catalyses the reaction CMP + ATP = CDP + ADP. The enzyme catalyses dCMP + ATP = dCDP + ADP. This is Cytidylate kinase from Symbiobacterium thermophilum (strain DSM 24528 / JCM 14929 / IAM 14863 / T).